The sequence spans 975 residues: Protein bicaudal D homolog 1 (975 aa).

2 coiled-coil regions span residues 1–265 (MAAE…HISI) and 319–496 (SELN…IANE). 5 disordered regions span residues 383 to 403 (SSKE…GEEA), 545 to 616 (RSGS…LDTS), 800 to 824 (DHEQ…VSGE), 836 to 877 (LLHS…ASYL), and 922 to 975 (DCQQ…PPHP). Basic and acidic residues-rich tracts occupy residues 385–403 (KELK…GEEA) and 581–590 (VAKESTEASK). Positions 592 to 602 (PSPTKTPTISP) are enriched in polar residues. The stretch at 663–803 (IDKDKEALME…LEDLEFDHEQ (141 aa)) forms a coiled coil. Residues 663–803 (IDKDKEALME…LEDLEFDHEQ (141 aa)) are interaction with RAB6A. Residues 840–877 (QGPQTPNIRVSSGTQRKRQFSPSLCDQSRPRTSGASYL) are compositionally biased toward polar residues.

Belongs to the BicD family. Interacts with RAB6A. Interacts (via C-terminus) with RAB6B (GTP-bound); the interaction is direct. Interacts with CLIP-115 and KIFC2. As to quaternary structure, (Microbial infection) Interacts with human cytomegalovirus/HHV-5 protein UL32. Expressed in the brain, heart and skeletal muscle.

It localises to the golgi apparatus. Its function is as follows. Regulates coat complex coatomer protein I (COPI)-independent Golgi-endoplasmic reticulum transport by recruiting the dynein-dynactin motor complex. The protein is Protein bicaudal D homolog 1 (BICD1) of Homo sapiens (Human).